We begin with the raw amino-acid sequence, 235 residues long: Thiopurine S-methyltransferase (235 aa).

S-adenosyl-L-methionine is bound by residues W13, L48, E69, and R126. The interval 199–235 (PDPQNGAPRRVEHKVYQLTGKRPASPEADGRAAETED) is disordered. Over residues 226–235 (ADGRAAETED) the composition is skewed to basic and acidic residues.

The protein belongs to the class I-like SAM-binding methyltransferase superfamily. TPMT family.

It is found in the cytoplasm. It carries out the reaction S-adenosyl-L-methionine + a thiopurine = S-adenosyl-L-homocysteine + a thiopurine S-methylether.. The chain is Thiopurine S-methyltransferase from Stutzerimonas stutzeri (strain A1501) (Pseudomonas stutzeri).